The primary structure comprises 302 residues: UDP-N-acetylenolpyruvoylglucosamine reductase (302 aa).

The FAD-binding PCMH-type domain occupies 30–196 (IGGPADLFVE…IAATLEMKKG (167 aa)). Arg174 is a catalytic residue. Ser225 (proton donor) is an active-site residue. Residue Glu295 is part of the active site.

This sequence belongs to the MurB family. Requires FAD as cofactor.

It localises to the cytoplasm. The enzyme catalyses UDP-N-acetyl-alpha-D-muramate + NADP(+) = UDP-N-acetyl-3-O-(1-carboxyvinyl)-alpha-D-glucosamine + NADPH + H(+). It participates in cell wall biogenesis; peptidoglycan biosynthesis. Functionally, cell wall formation. The polypeptide is UDP-N-acetylenolpyruvoylglucosamine reductase (Anoxybacillus flavithermus (strain DSM 21510 / WK1)).